We begin with the raw amino-acid sequence, 90 residues long: UPF0298 protein RBAM_014860 (90 aa).

This sequence belongs to the UPF0298 family.

The protein resides in the cytoplasm. The chain is UPF0298 protein RBAM_014860 from Bacillus velezensis (strain DSM 23117 / BGSC 10A6 / LMG 26770 / FZB42) (Bacillus amyloliquefaciens subsp. plantarum).